Reading from the N-terminus, the 210-residue chain is FMN-dependent NADH:quinone oxidoreductase (210 aa).

Residues Ser-10 and 16-18 (SRS) each bind FMN.

Belongs to the azoreductase type 1 family. Homodimer. Requires FMN as cofactor.

The catalysed reaction is 2 a quinone + NADH + H(+) = 2 a 1,4-benzosemiquinone + NAD(+). It catalyses the reaction N,N-dimethyl-1,4-phenylenediamine + anthranilate + 2 NAD(+) = 2-(4-dimethylaminophenyl)diazenylbenzoate + 2 NADH + 2 H(+). Functionally, quinone reductase that provides resistance to thiol-specific stress caused by electrophilic quinones. Also exhibits azoreductase activity. Catalyzes the reductive cleavage of the azo bond in aromatic azo compounds to the corresponding amines. This Kineococcus radiotolerans (strain ATCC BAA-149 / DSM 14245 / SRS30216) protein is FMN-dependent NADH:quinone oxidoreductase.